Here is a 518-residue protein sequence, read N- to C-terminus: Subtilisin-like protease 1 (518 aa).

Residues 1–19 form the signal peptide; it reads MGVFRFISISLAAVSAANA. Residues 20 to 116 constitute a propeptide that is removed on maturation; the sequence is AQILSMPHAQ…VEPDTIISVH (97 aa). Residues 34–115 enclose the Inhibitor I9 domain; that stretch reads SYIVMMKDDT…FVEPDTIISV (82 aa). One can recognise a Peptidase S8 domain in the interval 126–400; that stretch reads SWGLARISNP…NVLINNGGAK (275 aa). Residues Asp158 and His190 each act as charge relay system in the active site. Residues 175-198 are disordered; the sequence is GSNQVNDGDDRDGSGHGTHTSGTM. N-linked (GlcNAc...) asparagine glycans are attached at residues Asn233 and Asn251. Over residues 282–294 the composition is skewed to polar residues; it reads NDNQDAQSSSPAS. The tract at residues 282-312 is disordered; the sequence is NDNQDAQSSSPASEPSVCTVGSSAEDDSRSS. Ser345 acts as the Charge relay system in catalysis. A compositionally biased stretch (polar residues) spans 378–394; the sequence is TSSITDAGPGTPTNVLI. Positions 378–496 are disordered; the sequence is TSSITDAGPG…PYPGGDNFDF (119 aa). 2 stretches are compositionally biased toward pro residues: residues 405-470 and 478-487; these read NPNP…PGEP and APAPQHPHTP.

This sequence belongs to the peptidase S8 family.

The protein localises to the secreted. Functionally, secreted subtilisin-like serine protease with keratinolytic activity that contributes to pathogenicity. This Trichophyton verrucosum (strain HKI 0517) protein is Subtilisin-like protease 1 (SUB1).